Consider the following 157-residue polypeptide: NAD(P)H-quinone oxidoreductase subunit N (157 aa).

Belongs to the complex I NdhN subunit family. NDH-1 can be composed of about 15 different subunits; different subcomplexes with different compositions have been identified which probably have different functions.

It is found in the cellular thylakoid membrane. It catalyses the reaction a plastoquinone + NADH + (n+1) H(+)(in) = a plastoquinol + NAD(+) + n H(+)(out). The enzyme catalyses a plastoquinone + NADPH + (n+1) H(+)(in) = a plastoquinol + NADP(+) + n H(+)(out). NDH-1 shuttles electrons from an unknown electron donor, via FMN and iron-sulfur (Fe-S) centers, to quinones in the respiratory and/or the photosynthetic chain. The immediate electron acceptor for the enzyme in this species is believed to be plastoquinone. Couples the redox reaction to proton translocation, and thus conserves the redox energy in a proton gradient. Cyanobacterial NDH-1 also plays a role in inorganic carbon-concentration. The sequence is that of NAD(P)H-quinone oxidoreductase subunit N from Synechococcus sp. (strain CC9902).